A 548-amino-acid polypeptide reads, in one-letter code: Glucose-6-phosphate isomerase (548 aa).

Glu-355 serves as the catalytic Proton donor. Catalysis depends on residues His-386 and Lys-514.

It belongs to the GPI family.

The protein localises to the cytoplasm. It catalyses the reaction alpha-D-glucose 6-phosphate = beta-D-fructose 6-phosphate. The protein operates within carbohydrate biosynthesis; gluconeogenesis. Its pathway is carbohydrate degradation; glycolysis; D-glyceraldehyde 3-phosphate and glycerone phosphate from D-glucose: step 2/4. Functionally, catalyzes the reversible isomerization of glucose-6-phosphate to fructose-6-phosphate. The polypeptide is Glucose-6-phosphate isomerase (Hamiltonella defensa subsp. Acyrthosiphon pisum (strain 5AT)).